We begin with the raw amino-acid sequence, 711 residues long: Ribosomal RNA large subunit methyltransferase K/L (711 aa).

One can recognise a THUMP domain in the interval 43–154 (LGYRITLWSR…RGQITIGLNF (112 aa)).

The protein belongs to the methyltransferase superfamily. RlmKL family.

Its subcellular location is the cytoplasm. The catalysed reaction is guanosine(2445) in 23S rRNA + S-adenosyl-L-methionine = N(2)-methylguanosine(2445) in 23S rRNA + S-adenosyl-L-homocysteine + H(+). It catalyses the reaction guanosine(2069) in 23S rRNA + S-adenosyl-L-methionine = N(2)-methylguanosine(2069) in 23S rRNA + S-adenosyl-L-homocysteine + H(+). In terms of biological role, specifically methylates the guanine in position 2445 (m2G2445) and the guanine in position 2069 (m7G2069) of 23S rRNA. This Shewanella sediminis (strain HAW-EB3) protein is Ribosomal RNA large subunit methyltransferase K/L.